Reading from the N-terminus, the 346-residue chain is NADH-ubiquinone oxidoreductase chain 2 (346 aa).

A run of 11 helical transmembrane segments spans residues 1 to 21, 25 to 45, 60 to 80, 95 to 115, 124 to 144, 149 to 169, 178 to 195, 200 to 219, 242 to 262, 274 to 294, and 326 to 346; these read MNPH…TITI, HWVL…PLIS, FLTQ…NAWA, CLLL…HFWF, LMTA…LLLM, LNPA…GWMG, ILAF…IILV, LALL…FMAL, ATLM…GFMP, EMTP…FFYL, and AILA…HAIV.

It belongs to the complex I subunit 2 family.

It localises to the mitochondrion inner membrane. The enzyme catalyses a ubiquinone + NADH + 5 H(+)(in) = a ubiquinol + NAD(+) + 4 H(+)(out). In terms of biological role, core subunit of the mitochondrial membrane respiratory chain NADH dehydrogenase (Complex I) that is believed to belong to the minimal assembly required for catalysis. Complex I functions in the transfer of electrons from NADH to the respiratory chain. The immediate electron acceptor for the enzyme is believed to be ubiquinone. The sequence is that of NADH-ubiquinone oxidoreductase chain 2 (MT-ND2) from Mareca penelope (Eurasian wigeon).